We begin with the raw amino-acid sequence, 311 residues long: MIPEEIYKILRKQRYQIDGHTAVKLCGWVRKKMLEDKNCYKSKFYGIETHRCIQCTPSVIWCQQNCIFCWRVLPRDIGIDISQIKEPKWEEPEVVYEKILAMHKRIIMGYAGVLDRVGEKKFKEALEPKHVAISLSGEPTLYPYLDELIKIFHKNGFTTFVVSNGILTDVIEKIEPTQLYISLDAYDLDSYRRICGGKKEYWESILNTLDILKEKKRTCIRTTLIRGYNDDILKFVELYERADVHFIELKSYMHVGYSQKRLKKEDMLQHDEILKLAKMLDENSSYKLIDDSEDSRVALLQNENRKINPKL.

[4Fe-4S] cluster-binding residues include Cys26, Cys39, Cys52, Cys62, Cys66, and Cys69. One can recognise a Radical SAM core domain in the interval 45–283 (YGIETHRCIQ…LKLAKMLDEN (239 aa)).

The protein belongs to the TYW1 family. Monomer. Requires [4Fe-4S] cluster as cofactor.

It is found in the cytoplasm. It catalyses the reaction N(1)-methylguanosine(37) in tRNA(Phe) + pyruvate + S-adenosyl-L-methionine = 4-demethylwyosine(37) in tRNA(Phe) + 5'-deoxyadenosine + L-methionine + CO2 + H2O. Its function is as follows. Component of the wyosine derivatives biosynthesis pathway that catalyzes the condensation of N-methylguanine with 2 carbon atoms from pyruvate to form the tricyclic 4-demethylwyosine (imG-14) on guanosine-37 of tRNA(Phe). The chain is S-adenosyl-L-methionine-dependent tRNA 4-demethylwyosine synthase from Methanocaldococcus jannaschii (strain ATCC 43067 / DSM 2661 / JAL-1 / JCM 10045 / NBRC 100440) (Methanococcus jannaschii).